The chain runs to 362 residues: Probable protein phosphatase 2C 24 (362 aa).

The region spanning 77 to 360 is the PPM-type phosphatase domain; the sequence is RYGVSSVCGR…DNVSVVVIDL (284 aa). Residues aspartate 117, glycine 118, aspartate 295, and aspartate 351 each coordinate Mn(2+).

This sequence belongs to the PP2C family. Requires Mg(2+) as cofactor. It depends on Mn(2+) as a cofactor.

It catalyses the reaction O-phospho-L-seryl-[protein] + H2O = L-seryl-[protein] + phosphate. The catalysed reaction is O-phospho-L-threonyl-[protein] + H2O = L-threonyl-[protein] + phosphate. This is Probable protein phosphatase 2C 24 from Arabidopsis thaliana (Mouse-ear cress).